The chain runs to 103 residues: Small ribosomal subunit protein uS10 (103 aa).

This sequence belongs to the universal ribosomal protein uS10 family. Part of the 30S ribosomal subunit.

Involved in the binding of tRNA to the ribosomes. The polypeptide is Small ribosomal subunit protein uS10 (Blochmanniella pennsylvanica (strain BPEN)).